We begin with the raw amino-acid sequence, 505 residues long: Glycerol kinase (505 aa).

Residue T14 coordinates ADP. ATP is bound by residues T14, T15, and S16. T14 serves as a coordination point for sn-glycerol 3-phosphate. Position 18 (R18) interacts with ADP. The sn-glycerol 3-phosphate site is built by R84, E85, Y136, and D246. Glycerol is bound by residues R84, E85, Y136, D246, and Q247. Residues T268 and G311 each contribute to the ADP site. The ATP site is built by T268, G311, Q315, and G412. Positions 412 and 416 each coordinate ADP.

This sequence belongs to the FGGY kinase family.

It carries out the reaction glycerol + ATP = sn-glycerol 3-phosphate + ADP + H(+). The protein operates within polyol metabolism; glycerol degradation via glycerol kinase pathway; sn-glycerol 3-phosphate from glycerol: step 1/1. Inhibited by fructose 1,6-bisphosphate (FBP). Functionally, key enzyme in the regulation of glycerol uptake and metabolism. Catalyzes the phosphorylation of glycerol to yield sn-glycerol 3-phosphate. This Vibrio campbellii (strain ATCC BAA-1116) protein is Glycerol kinase.